Reading from the N-terminus, the 433-residue chain is Histidinol dehydrogenase 2 (433 aa).

NAD(+)-binding residues include Y130, Q192, and N215. Substrate contacts are provided by S238, Q260, and H263. Zn(2+) is bound by residues Q260 and H263. Residues E328 and H329 each act as proton acceptor in the active site. 4 residues coordinate substrate: H329, D362, E416, and H421. Residue D362 participates in Zn(2+) binding. H421 is a Zn(2+) binding site.

The protein belongs to the histidinol dehydrogenase family. Zn(2+) is required as a cofactor.

It carries out the reaction L-histidinol + 2 NAD(+) + H2O = L-histidine + 2 NADH + 3 H(+). It participates in amino-acid biosynthesis; L-histidine biosynthesis; L-histidine from 5-phospho-alpha-D-ribose 1-diphosphate: step 9/9. Its function is as follows. Catalyzes the sequential NAD-dependent oxidations of L-histidinol to L-histidinaldehyde and then to L-histidine. This Trichormus variabilis (strain ATCC 29413 / PCC 7937) (Anabaena variabilis) protein is Histidinol dehydrogenase 2.